The chain runs to 166 residues: MTESTSLRPAYARLLDRAVRILAVRDHSEQELRRKLAAPIMGKNGPEEIDATAEDYERVIAWCHEHGYLDDSRFVARFIASRSRKGYGPARIRQELNQKGISREATEKAMRECDIDWCALARDQATRKYGEPLPTVFSEKVKIQRFLLYRGYLMEDIQDIWRNFAD.

The protein belongs to the RecX family.

It localises to the cytoplasm. In terms of biological role, modulates RecA activity. The protein is Regulatory protein RecX of Escherichia coli (strain SMS-3-5 / SECEC).